The following is a 205-amino-acid chain: Ribonuclease HII (205 aa).

An RNase H type-2 domain is found at glutamate 14–leucine 201. Aspartate 20, glutamate 21, and aspartate 111 together coordinate a divalent metal cation.

It belongs to the RNase HII family. It depends on Mn(2+) as a cofactor. Mg(2+) serves as cofactor.

The protein localises to the cytoplasm. It carries out the reaction Endonucleolytic cleavage to 5'-phosphomonoester.. Endonuclease that specifically degrades the RNA of RNA-DNA hybrids. The polypeptide is Ribonuclease HII (Orientia tsutsugamushi (strain Boryong) (Rickettsia tsutsugamushi)).